The following is a 102-amino-acid chain: Small ribosomal subunit protein uS10 (102 aa).

It belongs to the universal ribosomal protein uS10 family. As to quaternary structure, part of the 30S ribosomal subunit.

In terms of biological role, involved in the binding of tRNA to the ribosomes. The polypeptide is Small ribosomal subunit protein uS10 (Clostridium perfringens (strain ATCC 13124 / DSM 756 / JCM 1290 / NCIMB 6125 / NCTC 8237 / Type A)).